A 415-amino-acid polypeptide reads, in one-letter code: UV excision repair protein RAD23 homolog B (415 aa).

In terms of domain architecture, Ubiquitin-like spans methionine 1 to alanine 79. The segment at valine 80–asparagine 175 is disordered. The segment covering valine 84 to threonine 143 has biased composition (low complexity). Threonine 155 is modified (phosphothreonine). Serine 160 and serine 174 each carry phosphoserine. At threonine 186 the chain carries Phosphothreonine. The UBA 1 domain maps to glutamine 188–glycine 228. Phosphoserine is present on serine 199. Tyrosine 202 carries the phosphotyrosine modification. An STI1 domain is found at histidine 274–isoleucine 317. The tract at residues glutamate 334–isoleucine 355 is disordered. Over residues glycine 336–isoleucine 355 the composition is skewed to gly residues. A UBA 2 domain is found at proline 370 to glutamine 410.

Belongs to the RAD23 family. As to quaternary structure, component of the XPC complex composed of XPC, RAD23B and CETN2. Interacts with NGLY1 and PSMC1. Interacts with ATXN3. Interacts with AMFR. Interacts with VCP; the interaction is indirect and mediated by NGLY1.

It is found in the nucleus. Its subcellular location is the cytoplasm. Its function is as follows. Multiubiquitin chain receptor involved in modulation of proteasomal degradation. Binds to polyubiquitin chains. Proposed to be capable to bind simultaneously to the 26S proteasome and to polyubiquitinated substrates and to deliver ubiquitinated proteins to the proteasome. May play a role in endoplasmic reticulum-associated degradation (ERAD) of misfolded glycoproteins by association with PNGase and delivering deglycosylated proteins to the proteasome. Involved in global genome nucleotide excision repair (GG-NER) by acting as component of the XPC complex. Cooperatively with Cetn2 appears to stabilize Xpc. May protect Xpc from proteasomal degradation. Functionally, the XPC complex is proposed to represent the first factor bound at the sites of DNA damage and together with other core recognition factors, Xpa, RPA and the TFIIH complex, is part of the pre-incision (or initial recognition) complex. The XPC complex recognizes a wide spectrum of damaged DNA characterized by distortions of the DNA helix such as single-stranded loops, mismatched bubbles or single-stranded overhangs. The orientation of XPC complex binding appears to be crucial for inducing a productive NER. XPC complex is proposed to recognize and to interact with unpaired bases on the undamaged DNA strand which is followed by recruitment of the TFIIH complex and subsequent scanning for lesions in the opposite strand in a 5'-to-3' direction by the NER machinery. Cyclobutane pyrimidine dimers (CPDs) which are formed upon UV-induced DNA damage esacpe detection by the XPC complex due to a low degree of structural perurbation. Instead they are detected by the UV-DDB complex which in turn recruits and cooperates with the XPC complex in the respective DNA repair. In vitro, the XPC:RAD23B dimer is sufficient to initiate NER; it preferentially binds to cisplatin and UV-damaged double-stranded DNA and also binds to a variety of chemically and structurally diverse DNA adducts. XPC:RAD23B contacts DNA both 5' and 3' of a cisplatin lesion with a preference for the 5' side. Xpc:Rad22b induces a bend in DNA upon binding. Xpc:Rad23b stimulates the activity of DNA glycosylases Tdg and Smug1. This chain is UV excision repair protein RAD23 homolog B (Rad23b), found in Rattus norvegicus (Rat).